The chain runs to 221 residues: High frequency lysogenization protein HflD homolog (221 aa).

Belongs to the HflD family.

The protein resides in the cytoplasm. It is found in the cell inner membrane. This Acidithiobacillus ferrooxidans (strain ATCC 23270 / DSM 14882 / CIP 104768 / NCIMB 8455) (Ferrobacillus ferrooxidans (strain ATCC 23270)) protein is High frequency lysogenization protein HflD homolog.